We begin with the raw amino-acid sequence, 910 residues long: MGTPRAQHPPPPQLLFLILLSCPWIQGLPLKEEEILPEPGSETPTVASEALAELLHGALLRRGPEMGYLPGSDRDPTLATPPAGQTLAVPSLPRATEPGTGPLTTAVTPNGVRGAGPTAPELLTPPPGTTAPPPPSPASPGPPLGPEGGEEETTTTIITTTTVTTTVTSPVLCNNNISEGEGYVESPDLGSPVSRTLGLLDCTYSIHVYPGYGIEIQVQTLNLSQEEELLVLAGGGSPGLAPRLLANSSMLGEGQVLRSPTNRLLLHFQSPRVPRGGGFRIHYQAYLLSCGFPPRPAHGDVSVTDLHPGGTATFHCDSGYQLQGEETLICLNGTRPSWNGETPSCMASCGGTIHNATLGRIVSPEPGGAVGPNLTCRWVIEAAEGRRLHLHFERVSLDEDNDRLMVRSGGSPLSPVIYDSDMDDVPERGLISDAQSLYVELLSETPANPLLLSLRFEAFEEDRCFAPFLAHGNVTTTDPEYRPGALATFSCLPGYALEPPGPPNAIECVDPTEPHWNDTEPACKAMCGGELSEPAGVVLSPDWPQSYSPGQDCVWGVHVQEEKRILLQVEILNVREGDMLTLFDGDGPSARVLAQLRGPQPRRRLLSSGPDLTLQFQAPPGPPNPGLGQGFVLHFKEVPRNDTCPELPPPEWGWRTASHGDLIRGTVLTYQCEPGYELLGSDILTCQWDLSWSAAPPACQKIMTCADPGEIANGHRTASDAGFPVGSHVQYRCLPGYSLEGAAMLTCYSRDTGTPKWSDRVPKCALKYEPCLNPGVPENGYQTLYKHHYQAGESLRFFCYEGFELIGEVTITCVPGHPSQWTSQPPLCKVTQTTDPSRQLEGGNLALAILLPLGLVIVLGSGVYIYYTKLQGKSLFGFSGSHSYSPITVESDFSNPLYEAGDTREYEVSI.

Residues 1–27 form the signal peptide; the sequence is MGTPRAQHPPPPQLLFLILLSCPWIQG. The Extracellular segment spans residues 28–844; that stretch reads LPLKEEEILP…DPSRQLEGGN (817 aa). The O-glycosylated at one site stretch occupies residues 41-48; that stretch reads SETPTVAS. Residues 65–152 form a disordered region; it reads EMGYLPGSDR…PLGPEGGEEE (88 aa). Positions 123 to 145 are enriched in pro residues; sequence LTPPPGTTAPPPPSPASPGPPLG. The cysteines at positions 173 and 202 are disulfide-linked. The region spanning 173 to 286 is the CUB 1 domain; that stretch reads CNNNISEGEG…GGFRIHYQAY (114 aa). Asn-176, Asn-222, and Asn-247 each carry an N-linked (GlcNAc...) asparagine glycan. In terms of domain architecture, Sushi 1 spans 288–347; sequence LSCGFPPRPAHGDVSVTDLHPGGTATFHCDSGYQLQGEETLICLNGTRPSWNGETPSCMA. 6 disulfides stabilise this stretch: Cys-290–Cys-330, Cys-316–Cys-345, Cys-349–Cys-376, Cys-464–Cys-508, Cys-491–Cys-523, and Cys-527–Cys-553. N-linked (GlcNAc...) asparagine glycosylation is found at Asn-332, Asn-355, Asn-373, Asn-473, and Asn-517. In terms of domain architecture, CUB 2 spans 349-459; that stretch reads CGGTIHNATL…LLLSLRFEAF (111 aa). A Sushi 2 domain is found at 462-525; the sequence is DRCFAPFLAH…WNDTEPACKA (64 aa). Residues 527–638 form the CUB 3 domain; that stretch reads CGGELSEPAG…QGFVLHFKEV (112 aa). Asn-641 carries an N-linked (GlcNAc...) asparagine glycan. Sushi domains follow at residues 642 to 701, 703 to 766, and 769 to 830; these read DTCP…ACQK, MTCA…KCAL, and EPCL…LCKV. 6 disulfide bridges follow: Cys-644-Cys-686, Cys-672-Cys-699, Cys-705-Cys-747, Cys-733-Cys-764, Cys-771-Cys-813, and Cys-799-Cys-828. A helical transmembrane segment spans residues 845–865; sequence LALAILLPLGLVIVLGSGVYI. Residues 866 to 910 lie on the Cytoplasmic side of the membrane; that stretch reads YYTKLQGKSLFGFSGSHSYSPITVESDFSNPLYEAGDTREYEVSI.

It belongs to the SEZ6 family. In terms of processing, O-glycosylated with core 1 or possibly core 8 glycans.

Its subcellular location is the cell membrane. It is found in the endoplasmic reticulum membrane. May contribute to specialized endoplasmic reticulum functions in neurons. The chain is Seizure 6-like protein 2 (SEZ6L2) from Homo sapiens (Human).